Here is a 138-residue protein sequence, read N- to C-terminus: MSDTLLAFDFGTKSIGVAIGQRITGTARPLPAIKAQDGTPDWTLIERLLKEWQPDEIIVGLPLNMDGTEQPLTARARKFANRIHGRFGVTVTLHDERLSTVEARSGLFERGGYRALNKGKVDSASAVIILESYFEQGY.

It belongs to the YqgF nuclease family.

It localises to the cytoplasm. Could be a nuclease involved in processing of the 5'-end of pre-16S rRNA. The chain is Putative pre-16S rRNA nuclease from Salmonella schwarzengrund (strain CVM19633).